Consider the following 142-residue polypeptide: Clock-controlled protein 6 (142 aa).

It belongs to the SED1 family.

This is Clock-controlled protein 6 (ccg-6) from Neurospora crassa (strain ATCC 24698 / 74-OR23-1A / CBS 708.71 / DSM 1257 / FGSC 987).